A 312-amino-acid polypeptide reads, in one-letter code: Pectinesterase inhibitor 10 (312 aa).

The N-terminal stretch at 1-25 is a signal peptide; it reads MNILSQTQILHLSIAILLFITTSSS. 2 stretches are compositionally biased toward low complexity: residues 24-36 and 44-55; these read SSSLSPSSSSPSL and SPSSAPPSSLSP. The interval 24-141 is disordered; sequence SSSLSPSSSS…PSSSSSTYSN (118 aa). Over residues 56–75 the composition is skewed to pro residues; sequence SSPPPLSLSPSSPPPPPPSS. 2 stretches are compositionally biased toward low complexity: residues 76-85 and 93-104; these read SPLSSLSPSL and SPSSAPPSSLSP. The segment covering 105–124 has biased composition (pro residues); sequence SSPPPLSLSPSSPPPPPPSS. Over residues 125 to 137 the composition is skewed to low complexity; it reads SPLSSLSPSSSSS. N-linked (GlcNAc...) asparagine glycans are attached at residues Asn141, Asn153, Asn185, and Asn200. Residues Cys152 and Cys161 are joined by a disulfide bond. Cys218 and Cys268 are oxidised to a cystine.

Belongs to the PMEI family.

Its subcellular location is the secreted. The protein localises to the extracellular space. It is found in the apoplast. Functionally, pectin methylesterase (PME) inhibitor involved in the maintenance of cell wall integrity in response to necrotrophic pathogens. Modulates PME activity and pectin methylesterification during infection by Botrytis cinerea and contributes to resistance against the pathogen. This Arabidopsis thaliana (Mouse-ear cress) protein is Pectinesterase inhibitor 10.